We begin with the raw amino-acid sequence, 221 residues long: MTRIKICGITRAEDALTAALAGADALGFNFSKKSPRLVSPDTAREIIAALPPLVAPVGIFVEQSAEEINELCRYCGLQIAQLHSDEYGAEATMRIHGTKVIRVFRPGPGFSVNEVRTYAKQTGCRGFLFDAFSPEMAGGTGKTIESSTASMLFEQTRDIGWALLAGGLNPENVADAVRLINPWGVDTASGVESAPGIKDARKITSFIQAVREVDRMLTAAD.

This sequence belongs to the TrpF family.

It catalyses the reaction N-(5-phospho-beta-D-ribosyl)anthranilate = 1-(2-carboxyphenylamino)-1-deoxy-D-ribulose 5-phosphate. The protein operates within amino-acid biosynthesis; L-tryptophan biosynthesis; L-tryptophan from chorismate: step 3/5. This is N-(5'-phosphoribosyl)anthranilate isomerase from Chlorobaculum parvum (strain DSM 263 / NCIMB 8327) (Chlorobium vibrioforme subsp. thiosulfatophilum).